The sequence spans 491 residues: N-succinylglutamate 5-semialdehyde dehydrogenase (491 aa).

223–228 (GSANTG) contacts NAD(+). Catalysis depends on residues Glu-246 and Cys-280.

It belongs to the aldehyde dehydrogenase family. AstD subfamily.

The enzyme catalyses N-succinyl-L-glutamate 5-semialdehyde + NAD(+) + H2O = N-succinyl-L-glutamate + NADH + 2 H(+). Its pathway is amino-acid degradation; L-arginine degradation via AST pathway; L-glutamate and succinate from L-arginine: step 4/5. Catalyzes the NAD-dependent reduction of succinylglutamate semialdehyde into succinylglutamate. This Photorhabdus laumondii subsp. laumondii (strain DSM 15139 / CIP 105565 / TT01) (Photorhabdus luminescens subsp. laumondii) protein is N-succinylglutamate 5-semialdehyde dehydrogenase.